The chain runs to 709 residues: Polyribonucleotide nucleotidyltransferase (709 aa).

Mg(2+) contacts are provided by aspartate 490 and aspartate 496. The region spanning 557–616 (PKVITMRVLPEKIPVIIGPSGKNIKKIIDETGVKIDLDQEGLVRIYAVDGESADKAKEMI) is the KH domain. An S1 motif domain is found at 626-694 (GEVYMGKVTR…EMGRAKVSLK (69 aa)).

Belongs to the polyribonucleotide nucleotidyltransferase family. Mg(2+) serves as cofactor.

The protein resides in the cytoplasm. It catalyses the reaction RNA(n+1) + phosphate = RNA(n) + a ribonucleoside 5'-diphosphate. Involved in mRNA degradation. Catalyzes the phosphorolysis of single-stranded polyribonucleotides processively in the 3'- to 5'-direction. In Persephonella marina (strain DSM 14350 / EX-H1), this protein is Polyribonucleotide nucleotidyltransferase.